Reading from the N-terminus, the 650-residue chain is DNA gyrase subunit B (650 aa).

Over residues 400–414 (RRSQEARELTRRKSP) the composition is skewed to basic and acidic residues. The tract at residues 400–422 (RRSQEARELTRRKSPFDSGSLPG) is disordered. In terms of domain architecture, Toprim spans 435-549 (SELYIVEGDS…QGNIFIAQPP (115 aa)). Mg(2+) contacts are provided by Glu-441, Asp-514, and Asp-516.

The protein belongs to the type II topoisomerase GyrB family. Heterotetramer, composed of two GyrA and two GyrB chains. In the heterotetramer, GyrA contains the active site tyrosine that forms a transient covalent intermediate with DNA, while GyrB binds cofactors and catalyzes ATP hydrolysis. The cofactor is Mg(2+). It depends on Mn(2+) as a cofactor. Requires Ca(2+) as cofactor.

Its subcellular location is the cytoplasm. It catalyses the reaction ATP-dependent breakage, passage and rejoining of double-stranded DNA.. In terms of biological role, a type II topoisomerase that negatively supercoils closed circular double-stranded (ds) DNA in an ATP-dependent manner to modulate DNA topology and maintain chromosomes in an underwound state. Negative supercoiling favors strand separation, and DNA replication, transcription, recombination and repair, all of which involve strand separation. Also able to catalyze the interconversion of other topological isomers of dsDNA rings, including catenanes and knotted rings. Type II topoisomerases break and join 2 DNA strands simultaneously in an ATP-dependent manner. The polypeptide is DNA gyrase subunit B (Mycoplasma genitalium (strain ATCC 33530 / DSM 19775 / NCTC 10195 / G37) (Mycoplasmoides genitalium)).